Consider the following 567-residue polypeptide: Major facilitator superfamily transporter MG061 (567 aa).

Helical transmembrane passes span 15-35, 78-98, 104-124, 193-213, 230-250, 264-284, 321-341, 363-383, 405-425, 426-446, 462-482, and 503-523; these read ITLW…WFVI, WTIT…VLKF, VLIM…GDPL, GYAL…TLVV, ILSN…FTPF, VYIM…FLWF, LIGV…PAWF, TGLA…FVVF, IVVL…SAAG, FALI…LSSS, LPIL…LFDI, and PGVI…NLIV.

This sequence belongs to the major facilitator superfamily.

Its subcellular location is the cell membrane. This chain is Major facilitator superfamily transporter MG061, found in Mycoplasma genitalium (strain ATCC 33530 / DSM 19775 / NCTC 10195 / G37) (Mycoplasmoides genitalium).